The following is a 711-amino-acid chain: Polyribonucleotide nucleotidyltransferase (711 aa).

Residues D486 and D492 each coordinate Mg(2+). The region spanning 553–612 (PRIHTIKINPDKIKDVIGKGGSVIRALTEETGTTIEIEDDGTVKIAATDGEKAKHAIRRI) is the KH domain. Residues 622–690 (GRVYTGKVTR…RQGRIRLSIK (69 aa)) form the S1 motif domain. The interval 689-711 (IKEATEQSQPAAAPEAPAAEQGE) is disordered. A compositionally biased stretch (low complexity) spans 694-711 (EQSQPAAAPEAPAAEQGE).

This sequence belongs to the polyribonucleotide nucleotidyltransferase family. Component of the RNA degradosome, which is a multiprotein complex involved in RNA processing and mRNA degradation. Requires Mg(2+) as cofactor.

It is found in the cytoplasm. It catalyses the reaction RNA(n+1) + phosphate = RNA(n) + a ribonucleoside 5'-diphosphate. Its function is as follows. Involved in mRNA degradation. Catalyzes the phosphorolysis of single-stranded polyribonucleotides processively in the 3'- to 5'-direction. This Escherichia coli (strain ATCC 8739 / DSM 1576 / NBRC 3972 / NCIMB 8545 / WDCM 00012 / Crooks) protein is Polyribonucleotide nucleotidyltransferase.